A 281-amino-acid chain; its full sequence is Pre T-cell antigen receptor alpha (281 aa).

A signal peptide spans 1 to 23 (MAGTWLLLLLALGCPALPTGVGG). Residues 24–146 (TPFPSLAPPI…QEPLRGTPGG (123 aa)) lie on the Extracellular side of the membrane. Cysteine 47 and cysteine 107 are oxidised to a cystine. The N-linked (GlcNAc...) asparagine glycan is linked to asparagine 67. The chain crosses the membrane as a helical span at residues 147 to 167 (ALWLGVLRLLLFKLLLFDLLL). Over 168–281 (TCSCLCDPAG…LPPPLQAGAA (114 aa)) the chain is Cytoplasmic. The interval 196-233 (LHPATETGGREATSSPRPQPRDRRWGDTPPGRKPGSPV) is disordered.

In terms of assembly, heterodimer with TCRB; disulfide linked. This heterodimer assembles with CD3 proteins into a signaling-competent pre-T-cell receptor complex. Interacts with RHBDD1. In terms of tissue distribution, expressed in immature but not mature T-cells. Also found in CD34+ cells from peripheral blood, CD34+ precursors from umbilical cord blood and adult bone marrow.

The protein resides in the membrane. The protein localises to the cell membrane. Component of the pre-T-cell receptor complex (composed of PTCRA, TCRB and the CD3 complex) that has a crucial role in early T-cell development, particularly alpha-beta T cell differentiation. The protein is Pre T-cell antigen receptor alpha of Homo sapiens (Human).